Consider the following 1318-residue polypeptide: DNA-directed RNA polymerase subunit beta' (1318 aa).

The Zn(2+) site is built by Cys60, Cys62, Cys75, and Cys78. Residues Asp535, Asp537, and Asp539 each coordinate Mg(2+). Zn(2+)-binding residues include Cys890, Cys967, Cys974, and Cys977.

The protein belongs to the RNA polymerase beta' chain family. The RNAP catalytic core consists of 2 alpha, 1 beta, 1 beta' and 1 omega subunit. When a sigma factor is associated with the core the holoenzyme is formed, which can initiate transcription. The cofactor is Mg(2+). Requires Zn(2+) as cofactor.

It carries out the reaction RNA(n) + a ribonucleoside 5'-triphosphate = RNA(n+1) + diphosphate. Functionally, DNA-dependent RNA polymerase catalyzes the transcription of DNA into RNA using the four ribonucleoside triphosphates as substrates. This is DNA-directed RNA polymerase subunit beta' from Rhodococcus erythropolis (strain PR4 / NBRC 100887).